Here is a 203-residue protein sequence, read N- to C-terminus: WUSCHEL-related homeobox 3 (203 aa).

Residues 4–68 (TPSTRWCPTP…NHKARERQRL (65 aa)) constitute a DNA-binding region (homeobox; WUS-type). 3 disordered regions span residues 73–95 (CARH…TAAA), 109–135 (LHHH…QQQQ), and 180–203 (STSG…TSTN). The span at 80 to 91 (PSPPSSTVPPAP) shows a compositional bias: pro residues. A compositionally biased stretch (basic residues) spans 109-118 (LHHHHHHHHP). 2 stretches are compositionally biased toward low complexity: residues 119 to 135 (YAAA…QQQQ) and 190 to 203 (CSSS…TSTN).

It belongs to the WUS homeobox family.

The protein localises to the nucleus. Functionally, transcription factor which may be involved in developmental processes. This is WUSCHEL-related homeobox 3 (WOX3) from Oryza sativa subsp. indica (Rice).